Reading from the N-terminus, the 379-residue chain is uncharacterized protein (379 aa).

This is an uncharacterized protein from Sinorhizobium fredii (strain NBRC 101917 / NGR234).